Reading from the N-terminus, the 379-residue chain is Alanine racemase (379 aa).

The active-site Proton acceptor; specific for D-alanine is the Lys-37. The residue at position 37 (Lys-37) is an N6-(pyridoxal phosphate)lysine. Arg-139 contacts substrate. Tyr-266 acts as the Proton acceptor; specific for L-alanine in catalysis. Met-314 contributes to the substrate binding site.

Belongs to the alanine racemase family. Pyridoxal 5'-phosphate serves as cofactor.

The enzyme catalyses L-alanine = D-alanine. The protein operates within amino-acid biosynthesis; D-alanine biosynthesis; D-alanine from L-alanine: step 1/1. In terms of biological role, catalyzes the interconversion of L-alanine and D-alanine. May also act on other amino acids. This Sorangium cellulosum (strain So ce56) (Polyangium cellulosum (strain So ce56)) protein is Alanine racemase (alr).